A 126-amino-acid polypeptide reads, in one-letter code: Glycine cleavage system H protein (126 aa).

Residues 21 to 103 (TVTIGISEHA…YEGGWIVKVK (83 aa)) form the Lipoyl-binding domain. Position 62 is an N6-lipoyllysine (lysine 62).

Belongs to the GcvH family. The glycine cleavage system is composed of four proteins: P, T, L and H. (R)-lipoate serves as cofactor.

Its function is as follows. The glycine cleavage system catalyzes the degradation of glycine. The H protein shuttles the methylamine group of glycine from the P protein to the T protein. The polypeptide is Glycine cleavage system H protein (Vibrio vulnificus (strain CMCP6)).